Reading from the N-terminus, the 100-residue chain is UPF0473 protein LMHCC_1068 (100 aa).

Belongs to the UPF0473 family.

This chain is UPF0473 protein LMHCC_1068, found in Listeria monocytogenes serotype 4a (strain HCC23).